The sequence spans 215 residues: MEITVDQMYNIENKGHDMGFLKKFMMENAGAAAVKRLVEKLGNVDSKNILIFVGMGNNGGDGLVMARHLAGYNAKVTVMLLGNPENIKTEESNWNWSILEKMPSVKLMTGGTTNFDFKPDVIVDGILGTGISGEIREPYASAINYINQTDCYKFAVDVPSGLDPQTGETANIFTKCDMTVTFHKMKQGIPKRKDLTGELFAEKIGIPPEAEEGIL.

Positions 8-212 (MYNIENKGHD…KIGIPPEAEE (205 aa)) constitute a YjeF N-terminal domain. A (6S)-NADPHX-binding site is contributed by 57-61 (NNGGD). Asn58 and Asp124 together coordinate K(+). (6S)-NADPHX is bound by residues 128-134 (GTGISGE), Tyr139, and Asp157. Ser160 provides a ligand contact to K(+).

It belongs to the NnrE/AIBP family. It depends on K(+) as a cofactor.

It carries out the reaction (6R)-NADHX = (6S)-NADHX. The catalysed reaction is (6R)-NADPHX = (6S)-NADPHX. Catalyzes the epimerization of the S- and R-forms of NAD(P)HX, a damaged form of NAD(P)H that is a result of enzymatic or heat-dependent hydration. This is a prerequisite for the S-specific NAD(P)H-hydrate dehydratase to allow the repair of both epimers of NAD(P)HX. This chain is NAD(P)H-hydrate epimerase, found in Nitrosopumilus maritimus (strain SCM1).